The following is a 94-amino-acid chain: CRISPR-associated endoribonuclease Cas2 (94 aa).

A Mg(2+)-binding site is contributed by aspartate 10.

This sequence belongs to the CRISPR-associated endoribonuclease Cas2 protein family. Homodimer, forms a heterotetramer with a Cas1 homodimer. Mg(2+) serves as cofactor.

In terms of biological role, CRISPR (clustered regularly interspaced short palindromic repeat), is an adaptive immune system that provides protection against mobile genetic elements (viruses, transposable elements and conjugative plasmids). CRISPR clusters contain sequences complementary to antecedent mobile elements and target invading nucleic acids. CRISPR clusters are transcribed and processed into CRISPR RNA (crRNA). Functions as a ssRNA-specific endoribonuclease. Involved in the integration of spacer DNA into the CRISPR cassette. This is CRISPR-associated endoribonuclease Cas2 from Leptospira interrogans serogroup Icterohaemorrhagiae serovar Lai (strain 56601).